Here is a 216-residue protein sequence, read N- to C-terminus: Ribosomal RNA small subunit methyltransferase G (216 aa).

S-adenosyl-L-methionine is bound by residues glycine 83, methionine 88, valine 134–glutamate 135, and arginine 149.

Belongs to the methyltransferase superfamily. RNA methyltransferase RsmG family.

The protein resides in the cytoplasm. The catalysed reaction is guanosine(527) in 16S rRNA + S-adenosyl-L-methionine = N(7)-methylguanosine(527) in 16S rRNA + S-adenosyl-L-homocysteine. Specifically methylates the N7 position of guanine in position 527 of 16S rRNA. This is Ribosomal RNA small subunit methyltransferase G from Pseudomonas entomophila (strain L48).